The chain runs to 1070 residues: DNA-directed RNA polymerase subunit beta (1070 aa).

The protein belongs to the RNA polymerase beta chain family. In plastids the minimal PEP RNA polymerase catalytic core is composed of four subunits: alpha, beta, beta', and beta''. When a (nuclear-encoded) sigma factor is associated with the core the holoenzyme is formed, which can initiate transcription.

The protein localises to the plastid. The protein resides in the chloroplast. The enzyme catalyses RNA(n) + a ribonucleoside 5'-triphosphate = RNA(n+1) + diphosphate. Functionally, DNA-dependent RNA polymerase catalyzes the transcription of DNA into RNA using the four ribonucleoside triphosphates as substrates. The chain is DNA-directed RNA polymerase subunit beta from Daucus carota (Wild carrot).